A 142-amino-acid chain; its full sequence is Large ribosomal subunit protein uL13 (142 aa).

Belongs to the universal ribosomal protein uL13 family. Part of the 50S ribosomal subunit.

This protein is one of the early assembly proteins of the 50S ribosomal subunit, although it is not seen to bind rRNA by itself. It is important during the early stages of 50S assembly. This is Large ribosomal subunit protein uL13 from Cupriavidus metallidurans (strain ATCC 43123 / DSM 2839 / NBRC 102507 / CH34) (Ralstonia metallidurans).